A 461-amino-acid chain; its full sequence is MLKIFNTLTRQKEEFKPIHAGEVGMYVCGITVYDLCHIGHGRTFVAFDVVARYLRFLGYKLKYVRNITDIDDKIIKRANENGESFVALVDRMIAEMHKDFDALNILRPDMEPRATHHIAEIIELTEQLIAKGHAYVADNGDVMFDVPTDPTYGVLSRQDLDQLQAGARVDVVDDKRNPMDFVLWKMSKEGEPSWPSPWGAGRPGWHIECSAMNCKQLGNHFDIHGGGSDLMFPHHENEIAQSTCAHDGQYVNYWMHSGMVMVDREKMSKSLGNFFTVRDVLKYYDAETVRYFLMSGHYRSQLNYSEENLKQARAALERLYTALRGTDKTVAPAGGEAFEARFIEAMDDDFNTPEAYSVLFDMAREVNRLKAEDMVAANAMASHLRKLSAVLGLLEQEPEAFLQSGAQADDSEVAEIEALIQQRLDARKAKDWAAADAARDRLNEMGIVLEDGPQGTTWRRK.

Cysteine 28 is a Zn(2+) binding site. The short motif at 30–40 (ITVYDLCHIGH) is the 'HIGH' region element. The Zn(2+) site is built by cysteine 209, histidine 234, and glutamate 238. The short motif at 266-270 (KMSKS) is the 'KMSKS' region element. Lysine 269 is an ATP binding site.

Belongs to the class-I aminoacyl-tRNA synthetase family. In terms of assembly, monomer. The cofactor is Zn(2+).

The protein resides in the cytoplasm. The catalysed reaction is tRNA(Cys) + L-cysteine + ATP = L-cysteinyl-tRNA(Cys) + AMP + diphosphate. This chain is Cysteine--tRNA ligase, found in Escherichia fergusonii (strain ATCC 35469 / DSM 13698 / CCUG 18766 / IAM 14443 / JCM 21226 / LMG 7866 / NBRC 102419 / NCTC 12128 / CDC 0568-73).